The primary structure comprises 297 residues: 4-diphosphocytidyl-2-C-methyl-D-erythritol kinase (297 aa).

Catalysis depends on residues K6 and D144.

Belongs to the GHMP kinase family. IspE subfamily.

It catalyses the reaction 4-CDP-2-C-methyl-D-erythritol + ATP = 4-CDP-2-C-methyl-D-erythritol 2-phosphate + ADP + H(+). It functions in the pathway isoprenoid biosynthesis; isopentenyl diphosphate biosynthesis via DXP pathway; isopentenyl diphosphate from 1-deoxy-D-xylulose 5-phosphate: step 3/6. In terms of biological role, catalyzes the phosphorylation of the position 2 hydroxy group of 4-diphosphocytidyl-2C-methyl-D-erythritol. In Leptospira interrogans serogroup Icterohaemorrhagiae serovar Lai (strain 56601), this protein is 4-diphosphocytidyl-2-C-methyl-D-erythritol kinase.